A 185-amino-acid polypeptide reads, in one-letter code: Ribosome-recycling factor (185 aa).

The protein belongs to the RRF family.

Its subcellular location is the cytoplasm. Its function is as follows. Responsible for the release of ribosomes from messenger RNA at the termination of protein biosynthesis. May increase the efficiency of translation by recycling ribosomes from one round of translation to another. The sequence is that of Ribosome-recycling factor from Roseiflexus sp. (strain RS-1).